A 208-amino-acid chain; its full sequence is EF-hand protein 5 variant 1 (208 aa).

A disordered region spans residues 1–34 (MQARGTVKVQGDAKVDGKMSTGQHSHHQHLNSTQ). 4 EF-hand domains span residues 64 to 98 (MAEG…HLTE), 99 to 134 (EEFH…EVDD), 135 to 170 (TMAD…LGER), and 171 to 206 (STPE…SRVN). 5 residues coordinate Ca(2+): E118, D123, D148, T152, and Y154.

The sequence is that of EF-hand protein 5 variant 1 from Trypanosoma cruzi.